Here is a 364-residue protein sequence, read N- to C-terminus: BOLA class I histocompatibility antigen, alpha chain BL3-7 (364 aa).

The first 27 residues, 1–27 (MRVMRVMRPRTLLLLLSGVLVLTETLA), serve as a signal peptide directing secretion. Residues 28–117 (GSHSLRYFYT…LRGYYNQSET (90 aa)) are alpha-1. Over 28–310 (GSHSLRYFYT…WEPPQTSFLI (283 aa)) the chain is Extracellular. The N-linked (GlcNAc...) asparagine glycan is linked to Asn113. Positions 118-209 (GSHNIQAMYG…ENGKDTLLRA (92 aa)) are alpha-2. Intrachain disulfides connect Cys128-Cys191 and Cys230-Cys286. An alpha-3 region spans residues 210–301 (DPPKAHVTHH…GLQEPLTLRW (92 aa)). The region spanning 212–298 (PKAHVTHHSI…QHEGLQEPLT (87 aa)) is the Ig-like C1-type domain. The connecting peptide stretch occupies residues 302–310 (EPPQTSFLI). Residues 311 to 331 (MGIIVGLVLLVVALVAGAVIW) traverse the membrane as a helical segment. Over 332–364 (RKKRSGEKGRIYTQAASSDSAQGSDVSLTVPKV) the chain is Cytoplasmic. Ser355 and Ser358 each carry phosphoserine.

Belongs to the MHC class I family. Heterodimer of an alpha chain and a beta chain (beta-2-microglobulin).

The protein localises to the membrane. Involved in the presentation of foreign antigens to the immune system. This chain is BOLA class I histocompatibility antigen, alpha chain BL3-7, found in Bos taurus (Bovine).